The chain runs to 314 residues: Zinc-binding alcohol dehydrogenase domain-containing protein cipB (314 aa).

This sequence belongs to the zinc-containing alcohol dehydrogenase family.

Functionally, involved in osmoadaptation. The polypeptide is Zinc-binding alcohol dehydrogenase domain-containing protein cipB (cipB) (Emericella nidulans (strain FGSC A4 / ATCC 38163 / CBS 112.46 / NRRL 194 / M139) (Aspergillus nidulans)).